The sequence spans 125 residues: Small ribosomal subunit protein uS13 (125 aa).

Belongs to the universal ribosomal protein uS13 family. In terms of assembly, part of the 30S ribosomal subunit. Forms a loose heterodimer with protein S19. Forms two bridges to the 50S subunit in the 70S ribosome.

Functionally, located at the top of the head of the 30S subunit, it contacts several helices of the 16S rRNA. In the 70S ribosome it contacts the 23S rRNA (bridge B1a) and protein L5 of the 50S subunit (bridge B1b), connecting the 2 subunits; these bridges are implicated in subunit movement. Contacts the tRNAs in the A and P-sites. This Rickettsia rickettsii (strain Iowa) protein is Small ribosomal subunit protein uS13.